Consider the following 262-residue polypeptide: Acyl-[acyl-carrier-protein]--UDP-N-acetylglucosamine O-acyltransferase (262 aa).

This sequence belongs to the transferase hexapeptide repeat family. LpxA subfamily. As to quaternary structure, homotrimer.

It localises to the cytoplasm. The enzyme catalyses a (3R)-hydroxyacyl-[ACP] + UDP-N-acetyl-alpha-D-glucosamine = a UDP-3-O-[(3R)-3-hydroxyacyl]-N-acetyl-alpha-D-glucosamine + holo-[ACP]. It functions in the pathway glycolipid biosynthesis; lipid IV(A) biosynthesis; lipid IV(A) from (3R)-3-hydroxytetradecanoyl-[acyl-carrier-protein] and UDP-N-acetyl-alpha-D-glucosamine: step 1/6. In terms of biological role, involved in the biosynthesis of lipid A, a phosphorylated glycolipid that anchors the lipopolysaccharide to the outer membrane of the cell. In Janthinobacterium sp. (strain Marseille) (Minibacterium massiliensis), this protein is Acyl-[acyl-carrier-protein]--UDP-N-acetylglucosamine O-acyltransferase.